The primary structure comprises 193 residues: Bifunctional protein PyrR (193 aa).

Substrate is bound by residues 48 to 49, R89, R93, 110 to 118, R143, and V167; these read TR and DDVLFSGRT. Positions 106–118 match the PRPP-binding motif; it reads VVLVDDVLFSGRT.

This sequence belongs to the purine/pyrimidine phosphoribosyltransferase family. PyrR subfamily.

The catalysed reaction is UMP + diphosphate = 5-phospho-alpha-D-ribose 1-diphosphate + uracil. Its function is as follows. Regulates the transcription of the pyrimidine nucleotide (pyr) operon in response to exogenous pyrimidines. Functionally, also displays a weak uracil phosphoribosyltransferase activity which is not physiologically significant. In Streptomyces coelicolor (strain ATCC BAA-471 / A3(2) / M145), this protein is Bifunctional protein PyrR.